We begin with the raw amino-acid sequence, 332 residues long: Beta-ketoacyl-[acyl-carrier-protein] synthase III (332 aa).

Catalysis depends on residues C116 and H257. The ACP-binding stretch occupies residues 258–262 (QANQR). N287 is an active-site residue.

This sequence belongs to the thiolase-like superfamily. FabH family. As to quaternary structure, homodimer.

The protein resides in the cytoplasm. The enzyme catalyses malonyl-[ACP] + acetyl-CoA + H(+) = 3-oxobutanoyl-[ACP] + CO2 + CoA. It functions in the pathway lipid metabolism; fatty acid biosynthesis. Its function is as follows. Catalyzes the condensation reaction of fatty acid synthesis by the addition to an acyl acceptor of two carbons from malonyl-ACP. Catalyzes the first condensation reaction which initiates fatty acid synthesis and may therefore play a role in governing the total rate of fatty acid production. Possesses both acetoacetyl-ACP synthase and acetyl transacylase activities. Its substrate specificity determines the biosynthesis of branched-chain and/or straight-chain of fatty acids. The protein is Beta-ketoacyl-[acyl-carrier-protein] synthase III of Acaryochloris marina (strain MBIC 11017).